Here is a 588-residue protein sequence, read N- to C-terminus: Sulfite reductase [NADPH] hemoprotein beta-component (588 aa).

C443, C449, C488, and C492 together coordinate [4Fe-4S] cluster. Siroheme is bound at residue C492.

The protein belongs to the nitrite and sulfite reductase 4Fe-4S domain family. In terms of assembly, alpha(8)-beta(8). The alpha component is a flavoprotein, the beta component is a hemoprotein. The cofactor is siroheme. It depends on [4Fe-4S] cluster as a cofactor.

It catalyses the reaction hydrogen sulfide + 3 NADP(+) + 3 H2O = sulfite + 3 NADPH + 4 H(+). It participates in sulfur metabolism; hydrogen sulfide biosynthesis; hydrogen sulfide from sulfite (NADPH route): step 1/1. Component of the sulfite reductase complex that catalyzes the 6-electron reduction of sulfite to sulfide. This is one of several activities required for the biosynthesis of L-cysteine from sulfate. This Actinobacillus succinogenes (strain ATCC 55618 / DSM 22257 / CCUG 43843 / 130Z) protein is Sulfite reductase [NADPH] hemoprotein beta-component.